The sequence spans 311 residues: tRNA dimethylallyltransferase (311 aa).

10–17 contacts ATP; the sequence is GPTAVGKS. 12–17 contacts substrate; sequence TAVGKS. The interval 35-38 is interaction with substrate tRNA; sequence DSMQ.

It belongs to the IPP transferase family. As to quaternary structure, monomer. Mg(2+) is required as a cofactor.

The catalysed reaction is adenosine(37) in tRNA + dimethylallyl diphosphate = N(6)-dimethylallyladenosine(37) in tRNA + diphosphate. Its function is as follows. Catalyzes the transfer of a dimethylallyl group onto the adenine at position 37 in tRNAs that read codons beginning with uridine, leading to the formation of N6-(dimethylallyl)adenosine (i(6)A). The protein is tRNA dimethylallyltransferase of Carboxydothermus hydrogenoformans (strain ATCC BAA-161 / DSM 6008 / Z-2901).